We begin with the raw amino-acid sequence, 340 residues long: Putative methionyl-tRNA formyltransferase (340 aa).

It belongs to the Fmt family.

It localises to the mitochondrion. The protein localises to the mitochondrion matrix. It is found in the cytoplasm. It catalyses the reaction L-methionyl-tRNA(fMet) + (6R)-10-formyltetrahydrofolate = N-formyl-L-methionyl-tRNA(fMet) + (6S)-5,6,7,8-tetrahydrofolate + H(+). Functionally, formylates methionyl-tRNA in mitochondria and the cytoplasm. Responsible for the formylation of the N-terminally formylated (Nt-formylated) mitochondrial matrix proteins that are encoded by mitochondrial DNA. Nt-formylated proteins in the cytoplasm are strongly up-regulated in stationary phase or upon starvation for specific amino acids and are targeted for degradation by an E3 ubiquitin ligase-mediated fMet/N-end rule pathway. Increased Nt-formylation of cytosolic proteins appears to be important for adaptation to these stresses. The protein is Putative methionyl-tRNA formyltransferase (fmt1) of Schizosaccharomyces pombe (strain 972 / ATCC 24843) (Fission yeast).